A 550-amino-acid polypeptide reads, in one-letter code: Glucose-6-phosphate isomerase (550 aa).

Glutamate 356 acts as the Proton donor in catalysis. Catalysis depends on residues histidine 387 and lysine 515.

The protein belongs to the GPI family.

The protein localises to the cytoplasm. The catalysed reaction is alpha-D-glucose 6-phosphate = beta-D-fructose 6-phosphate. It participates in carbohydrate biosynthesis; gluconeogenesis. The protein operates within carbohydrate degradation; glycolysis; D-glyceraldehyde 3-phosphate and glycerone phosphate from D-glucose: step 2/4. Catalyzes the reversible isomerization of glucose-6-phosphate to fructose-6-phosphate. This chain is Glucose-6-phosphate isomerase, found in Photobacterium profundum (strain SS9).